The chain runs to 80 residues: Small ribosomal subunit protein bS18 (80 aa).

Belongs to the bacterial ribosomal protein bS18 family. Part of the 30S ribosomal subunit. Forms a tight heterodimer with protein bS6.

Its function is as follows. Binds as a heterodimer with protein bS6 to the central domain of the 16S rRNA, where it helps stabilize the platform of the 30S subunit. This Clostridium botulinum (strain 657 / Type Ba4) protein is Small ribosomal subunit protein bS18.